A 314-amino-acid chain; its full sequence is Polyamine aminopropyltransferase (314 aa).

The 237-residue stretch at Trp-13–Asp-249 folds into the PABS domain. Gln-42 contacts S-methyl-5'-thioadenosine. The spermidine site is built by His-73 and Glu-97. Residues Asp-117 and Asp-149–Ala-150 each bind S-methyl-5'-thioadenosine. Asp-168 serves as the catalytic Proton acceptor. Pro-177 serves as a coordination point for S-methyl-5'-thioadenosine.

This sequence belongs to the spermidine/spermine synthase family. In terms of assembly, homodimer or homotetramer.

The protein resides in the cytoplasm. The enzyme catalyses S-adenosyl 3-(methylsulfanyl)propylamine + putrescine = S-methyl-5'-thioadenosine + spermidine + H(+). It participates in amine and polyamine biosynthesis; spermidine biosynthesis; spermidine from putrescine: step 1/1. Functionally, catalyzes the irreversible transfer of a propylamine group from the amino donor S-adenosylmethioninamine (decarboxy-AdoMet) to putrescine (1,4-diaminobutane) to yield spermidine. This Aeropyrum pernix (strain ATCC 700893 / DSM 11879 / JCM 9820 / NBRC 100138 / K1) protein is Polyamine aminopropyltransferase.